We begin with the raw amino-acid sequence, 146 residues long: Hemoglobin subunit beta-1 (146 aa).

The 145-residue stretch at 2–146 (HWTAEEKHLL…VAHALARRYH (145 aa)) folds into the Globin domain. Positions 63 and 92 each coordinate heme b.

This sequence belongs to the globin family. In terms of assembly, there are three forms of hemoglobin in Sphenodon: A, A' and D. Hb A is a tetramer of two alpha-A and two beta-1, Hb A' is a tetramer of two alpha-a and two beta-2, Hb D is a tetramer of two alpha-D and two beta-2.

Functionally, involved in oxygen transport from the lung to the various peripheral tissues. The protein is Hemoglobin subunit beta-1 (HBB1) of Sphenodon punctatus (Tuatara).